The chain runs to 323 residues: Elongation factor P--(R)-beta-lysine ligase (323 aa).

74–76 (SPE) is a substrate binding site. ATP is bound by residues 98–100 (RNE) and Asn-107. Tyr-116 contributes to the substrate binding site. 242–243 (EL) lines the ATP pocket. Substrate is bound at residue Glu-249. An ATP-binding site is contributed by Gly-298.

The protein belongs to the class-II aminoacyl-tRNA synthetase family. EpmA subfamily. Homodimer.

The catalysed reaction is D-beta-lysine + L-lysyl-[protein] + ATP = N(6)-((3R)-3,6-diaminohexanoyl)-L-lysyl-[protein] + AMP + diphosphate + H(+). In terms of biological role, with EpmB is involved in the beta-lysylation step of the post-translational modification of translation elongation factor P (EF-P). Catalyzes the ATP-dependent activation of (R)-beta-lysine produced by EpmB, forming a lysyl-adenylate, from which the beta-lysyl moiety is then transferred to the epsilon-amino group of a conserved specific lysine residue in EF-P. The polypeptide is Elongation factor P--(R)-beta-lysine ligase (Vibrio vulnificus (strain YJ016)).